We begin with the raw amino-acid sequence, 1104 residues long: MSFEGARLSMRSRRNGTLGSTRTLYSSVSRSTDVSYSESDLVNFIQANFKKRECVFFTRDSKAMESICKCGYAQSQHIEGTQINQNEKWNYKKHTKEFPTDAFGDIQFETLGKKGKYLRLSCDTDSETLYELLTQHWHLKTPNLVISVTGGAKNFALKPRMRKIFSRLIYIAQSKGAWILTGGTHYGLMKYIGEVVRDNTISRNSEENIVAIGIAAWGMVSNRDTLIRNCDDEGHFSAQYIMDDFMRDPLYILDNNHTHLLLVDNGCHGHPTVEAKLRNQLEKYISERTSQDSNYGGKIPIVCFAQGGGRETLKAINTSVKSKIPCVVVEGSGQIADVIASLVEVEDVLTSSMVKEKLVRFLPRTVSRLPEEEIESWIKWLKEILESPHLLTVIKMEEAGDEVVSSAISYALYKAFSTNEQDKDNWNGQLKLLLEWNQLDLASDEIFTNDRRWESADLQEVMFTALIKDRPKFVRLFLENGLNLQKFLTNEVLTELFSTHFSTLVYRNLQIAKNSYNDALLTFVWKLVANFRRSFWKEDRSSREDLDVELHDASLTTRHPLQALFIWAILQNKKELSKVIWEQTKGCTLAALGASKLLKTLAKVKNDINAAGESEELANEYETRAVELFTECYSSDEDLAEQLLVYSCEAWGGSNCLELAVEATDQHFIAQPGVQNFLSKQWYGEISRDTKNWKIILCLFIIPLVGCGLVSFRKKPIDKHKKLLWYYVAFFTSPFVVFSWNVVFYIAFLLLFAYVLLMDFHSVPHTPELILYALVFVLFCDEVRQWYMNGVNYFTDLWNVMDTLGLFYFIAGIVFRLHSSNKSSLYSGRVIFCLDYIIFTLRLIHIFTVSRNLGPKIIMLQRMLIDVFFFLFLFAVWMVAFGVARQGILRQNEQRWRWIFRSVIYEPYLAMFGQVPSDVDSTTYDFSHCTFSGNESKPLCVELDEYNLPRFPEWITIPLVCIYMLSTNILLVNLLVAMFGYTVGIVQENNDQVWKFQRYFLVQEYCNRLNIPFPFVVFAYFYMVVKKCFKCCCKEKNTESSACCFRNEDNETLAWEGVMKENYLVKINTKANDNAEEMRHRFRQLDTKLNDLKGLLKEIANKIK.

The Cytoplasmic portion of the chain corresponds to 1–733; that stretch reads MSFEGARLSM…LWYYVAFFTS (733 aa). A helical transmembrane segment spans residues 734–758; sequence PFVVFSWNVVFYIAFLLLFAYVLLM. The Extracellular portion of the chain corresponds to 759-765; the sequence is DFHSVPH. A helical membrane pass occupies residues 766–789; the sequence is TPELILYALVFVLFCDEVRQWYMN. Residues E782 and Q785 each coordinate Ca(2+). At 790 to 796 the chain is on the cytoplasmic side; the sequence is GVNYFTD. A helical membrane pass occupies residues 797-817; sequence LWNVMDTLGLFYFIAGIVFRL. 2 residues coordinate Ca(2+): N799 and D802. Topologically, residues 818 to 822 are extracellular; the sequence is HSSNK. Residues 823–848 traverse the membrane as a helical segment; sequence SSLYSGRVIFCLDYIIFTLRLIHIFT. Over 849 to 853 the chain is Cytoplasmic; that stretch reads VSRNL. The chain crosses the membrane as a helical span at residues 854–890; sequence GPKIIMLQRMLIDVFFFLFLFAVWMVAFGVARQGILR. The Extracellular portion of the chain corresponds to 891–895; sequence QNEQR. Residues 896–912 constitute an intramembrane region (pore-forming); that stretch reads WRWIFRSVIYEPYLAMF. Residues 913–953 are Extracellular-facing; sequence GQVPSDVDSTTYDFSHCTFSGNESKPLCVELDEYNLPRFPE. Residues 954-984 form a helical membrane-spanning segment; that stretch reads WITIPLVCIYMLSTNILLVNLLVAMFGYTVG. Over 985–1104 the chain is Cytoplasmic; sequence IVQENNDQVW…LLKEIANKIK (120 aa). The stretch at 1067–1104 forms a coiled coil; the sequence is INTKANDNAEEMRHRFRQLDTKLNDLKGLLKEIANKIK.

It belongs to the transient receptor (TC 1.A.4) family. LTrpC subfamily. TRPM8 sub-subfamily. As to quaternary structure, homotetramer. Interacts (via N-terminus and C-terminus domains) with TCAF1; the interaction stimulates TRPM8 channel activity. Interacts (via N-terminus and C-terminus domains) with TCAF2; the interaction inhibits TRPM8 channel activity. In terms of tissue distribution, expressed in dorsal root and trigeminal ganglia. Specifically expressed in a subset of sensory neurons, including cold-sensitive neurons in trigeminal neurons.

Its subcellular location is the cell membrane. The protein localises to the membrane raft. It catalyses the reaction Ca(2+)(in) = Ca(2+)(out). The enzyme catalyses Na(+)(in) = Na(+)(out). The catalysed reaction is K(+)(in) = K(+)(out). With respect to regulation, activated by cold temperatures and by both natural and synthetic cooling compounds such as menthol and icilin. Activation of the channel requires the presence of PI(4,5)P2; PI(4,5)P2 is necessary to gate the channel. Activated by intracellular Ca(2+). Its function is as follows. Non-selective ion channel permeable to monovalent and divalent cations, including Na(+), K(+), and Ca(2+), with higher permeability for Ca(2+). Activated by multiple factors, such as temperature, voltage, pressure, and changes in osmolality. Activated by cool temperatures (&lt;23-28 degrees Celsius) and by chemical ligands evoking a sensation of coolness, such as menthol and icilin, therefore plays a central role in the detection of environmental cold temperatures. TRPM8 is a voltage-dependent channel; its activation by cold or chemical ligands shifts its voltage thresholds towards physiological membrane potentials, leading to the opening of the channel. In addition to its critical role in temperature sensing, regulates basal tear secretion by sensing evaporation-induced cooling and changes in osmolality. This is Transient receptor potential cation channel subfamily M member 8 (Trpm8) from Rattus norvegicus (Rat).